We begin with the raw amino-acid sequence, 87 residues long: DNA polymerase epsilon subunit C (87 aa).

In terms of assembly, DNA polymerase epsilon is a heterotetramer consisting of cdc20/Pol2, dpb2, dpb3, and dpb4. Also forms a heterodimer consisting dpb3 and dpb4. Interacts directly with cdc20/pol2 and dpb4.

Its subcellular location is the nucleus. In terms of biological role, as accessory component of the DNA polymerase epsilon (DNA polymerase II) participates in chromosomal DNA replication. It is required during synthesis of the leading and lagging DNA strands at the replication fork and binds at/or near replication origins and moves along DNA with the replication fork. It has 3'-5' proofreading exonuclease activity that correct errors arising during DNA replication. It is also involved in DNA synthesis during DNA repair. The dpb3-dpb4 dimer associates with histone deacetylases, chromatin remodelers, and histones and plays a crucial role in the inheritance of histone hypoacetylation and H3K9 methylation in heterochromatin. The dpb3-dpb4 dimer is also required for the recruitment of sir2 to heterochromatin. In Schizosaccharomyces pombe (strain 972 / ATCC 24843) (Fission yeast), this protein is DNA polymerase epsilon subunit C.